The primary structure comprises 541 residues: MALGGLISNRNFGSFIGSGNGCQRLGKSGAEVSKLFPNALLCRNHQPLQASLHHESGHMRRSFGCFLQPRMDSVIRFRNSIKINRSRAYYKSEESDITEGVVPSADGSAEAILVEGNLQNASPWWQQFPRRWVIVLLCFSSFLLCNMDRVNMSIAILPMSQEYNWSSATVGLIQSSFFWGYLLTQILGGIWADKFGGKVVLGFGVVWWSFATIMTPIAARLGLPFLLVVRAFMGIGEGVAMPAMNNMLSKWIPVSERSRSLALVYSGMYLGSVTGLAFSPMLITKFGWPSVFYSFGSLGSIWFLLWLKFAYSSPKDDPDLSEEEKKVILGGSKPREPVTVIPWKLILSKPPVWALIISHFCHNWGTFILLTWMPTYYNQVLKFNLTESGLLCVLPWLTMAVFANIGGWIADTLVSRGLSITNVRKIMQSIGFLGPAFFLSQLSHVKTPAMAVLCMACSQGSDAFSQSGLYSNHQDIGPRYAGVLLGLSNTAGVLAGVFGTAATGYILQRGSWDDVFKVAVALYLIGTLVWNLFATGEKILD.

A chloroplast-targeting transit peptide spans 1 to 28 (MALGGLISNRNFGSFIGSGNGCQRLGKS). The next 11 membrane-spanning stretches (helical) occupy residues 133 to 155 (VIVL…MSIA), 170 to 190 (VGLI…LGGI), 199 to 219 (VVLG…PIAA), 221 to 241 (LGLP…GVAM), 263 to 283 (LVYS…PMLI), 286 to 306 (FGWP…FLLW), 352 to 372 (VWAL…LLTW), 390 to 410 (LLCV…GWIA), 430 to 450 (IGFL…TPAM), 481 to 501 (AGVL…FGTA), and 515 to 535 (VFKV…LFAT).

The protein belongs to the major facilitator superfamily. Sodium/anion cotransporter (TC 2.A.1.14) family. In terms of tissue distribution, expressed in stems, developing siliques, leaf mesophyll cells and sepals of mature flowers. Not detected in roots. Detected in palisade tissue rather than spongy tissue from the leaves.

It is found in the plastid. It localises to the chloroplast inner membrane. Its activity is regulated as follows. Insensitive to dehydroascorbate, p-isoascorbate, inorganic phosphate, glutamate, ATP, p-aminohippuric acid or tetraethylammonium. Its function is as follows. Inorganic phosphate and probable anion transporter. Ascorbate transporter bridging the chloroplast envelope. Transports ascorbate from the cytosol into the chloroplast. Requires chloride ions and the presence of an electrochemical potential across the membrane for activity. This Arabidopsis thaliana (Mouse-ear cress) protein is Ascorbate transporter, chloroplastic (PHT4;4).